The chain runs to 175 residues: ATP-dependent protease subunit HslV (175 aa).

T2 is a catalytic residue. Na(+) is bound by residues G158, C161, and T164.

The protein belongs to the peptidase T1B family. HslV subfamily. A double ring-shaped homohexamer of HslV is capped on each side by a ring-shaped HslU homohexamer. The assembly of the HslU/HslV complex is dependent on binding of ATP.

It localises to the cytoplasm. The catalysed reaction is ATP-dependent cleavage of peptide bonds with broad specificity.. With respect to regulation, allosterically activated by HslU binding. Protease subunit of a proteasome-like degradation complex believed to be a general protein degrading machinery. The polypeptide is ATP-dependent protease subunit HslV (Haemophilus influenzae (strain PittEE)).